The chain runs to 416 residues: Ribulose bisphosphate carboxylase large chain (416 aa).

Residues Asn-102 and Thr-152 each contribute to the substrate site. Lys-154 serves as the catalytic Proton acceptor. Lys-156 lines the substrate pocket. The Mg(2+) site is built by Lys-180, Asp-182, and Glu-183. Position 180 is an N6-carboxylysine (Lys-180). His-273 functions as the Proton acceptor in the catalytic mechanism. The substrate site is built by Arg-274, His-306, and Ser-358.

This sequence belongs to the RuBisCO large chain family. Type I subfamily. In terms of assembly, heterohexadecamer of 8 large chains and 8 small chains; disulfide-linked. The disulfide link is formed within the large subunit homodimers. Requires Mg(2+) as cofactor. In terms of processing, the disulfide bond which can form in the large chain dimeric partners within the hexadecamer appears to be associated with oxidative stress and protein turnover.

It localises to the plastid. Its subcellular location is the chloroplast. The enzyme catalyses 2 (2R)-3-phosphoglycerate + 2 H(+) = D-ribulose 1,5-bisphosphate + CO2 + H2O. It carries out the reaction D-ribulose 1,5-bisphosphate + O2 = 2-phosphoglycolate + (2R)-3-phosphoglycerate + 2 H(+). Its function is as follows. RuBisCO catalyzes two reactions: the carboxylation of D-ribulose 1,5-bisphosphate, the primary event in carbon dioxide fixation, as well as the oxidative fragmentation of the pentose substrate in the photorespiration process. Both reactions occur simultaneously and in competition at the same active site. The protein is Ribulose bisphosphate carboxylase large chain (rbcL) of Arthropteris beckleri (Fern).